The chain runs to 165 residues: MSLDSENTISENNDVRINNINLIASIVLWLLFVITVIGTFKPIHRVSMESNFSKYYKYTYCVDDKCTCVDYFTYGKVTIYCYNKNSVNCLAINWDNVGIIVILIFMLMIIMNGFYQMMKQKISVEDLVIMNQQLEYQRQNRMNNLYYHDNYGNLRMRMPGDYGYY.

Residues 20 to 40 (INLIASIVLWLLFVITVIGTF) form a helical membrane-spanning segment. N-linked (GlcNAc...) asparagine; by host glycosylation is present at asparagine 51. A helical transmembrane segment spans residues 97 to 117 (VGIIVILIFMLMIIMNGFYQM).

The protein resides in the membrane. This is an uncharacterized protein from Acanthamoeba polyphaga (Amoeba).